Reading from the N-terminus, the 612-residue chain is Indole-3-acetic acid-amido synthetase GH3.5 (612 aa).

This sequence belongs to the IAA-amido conjugating enzyme family.

Functionally, catalyzes the synthesis of indole-3-acetic acid (IAA)-amino acid conjugates, providing a mechanism for the plant to cope with the presence of excess auxin. Strongly reactive with Glu, Gln, Trp, Asp, Ala, Leu, Phe, Gly, Tyr, Met, Ile and Val. Little or no product formation with His, Ser, Thr, Arg, Lys, or Cys. Also active on pyruvic and butyric acid analogs of IAA, PAA and the synthetic auxin naphthaleneacetic acid (NAA). The two chlorinated synthetic auxin herbicides 2,4-D and 3,6-dichloro-o-anisic acid (dicamba) cannot be used as substrates. This Arabidopsis thaliana (Mouse-ear cress) protein is Indole-3-acetic acid-amido synthetase GH3.5 (GH3.5).